The following is a 142-amino-acid chain: Acetyltransferase SG1711 (142 aa).

Positions 1 to 142 (MEIRVFRHDD…GKRLIEDQEY (142 aa)) constitute an N-acetyltransferase domain.

The protein belongs to the acetyltransferase family. YpeA subfamily.

The polypeptide is Acetyltransferase SG1711 (Sodalis glossinidius (strain morsitans)).